Reading from the N-terminus, the 939-residue chain is UvrABC system protein A (939 aa).

Residue 32–39 coordinates ATP; that stretch reads GLSGSGKS. The C4-type zinc-finger motif lies at 252–279; sequence CPDCGISIGEISPSMFSFNAPFGKCDVC. ABC transporter domains are found at residues 309–588 and 608–936; these read WGEG…KESI and AGKN…QYLK. 640 to 647 is an ATP binding site; the sequence is GVSGSGKS. The C4-type zinc-finger motif lies at 739-765; it reads CEACKGDGIVRIEMQFLSDVYVPCDVC.

Belongs to the ABC transporter superfamily. UvrA family. Forms a heterotetramer with UvrB during the search for lesions.

It is found in the cytoplasm. The UvrABC repair system catalyzes the recognition and processing of DNA lesions. UvrA is an ATPase and a DNA-binding protein. A damage recognition complex composed of 2 UvrA and 2 UvrB subunits scans DNA for abnormalities. When the presence of a lesion has been verified by UvrB, the UvrA molecules dissociate. The chain is UvrABC system protein A from Clostridium acetobutylicum (strain ATCC 824 / DSM 792 / JCM 1419 / IAM 19013 / LMG 5710 / NBRC 13948 / NRRL B-527 / VKM B-1787 / 2291 / W).